We begin with the raw amino-acid sequence, 130 residues long: Small ribosomal subunit protein uS11 (130 aa).

The protein belongs to the universal ribosomal protein uS11 family. As to quaternary structure, part of the 30S ribosomal subunit. Interacts with proteins S7 and S18. Binds to IF-3.

In terms of biological role, located on the platform of the 30S subunit, it bridges several disparate RNA helices of the 16S rRNA. Forms part of the Shine-Dalgarno cleft in the 70S ribosome. The protein is Small ribosomal subunit protein uS11 of Borreliella afzelii (strain PKo) (Borrelia afzelii).